Reading from the N-terminus, the 93-residue chain is Small ribosomal subunit protein uS19 (93 aa).

Belongs to the universal ribosomal protein uS19 family.

Functionally, protein S19 forms a complex with S13 that binds strongly to the 16S ribosomal RNA. The chain is Small ribosomal subunit protein uS19 (rpsS) from Helicobacter pylori (strain ATCC 700392 / 26695) (Campylobacter pylori).